The following is a 376-amino-acid chain: Succinyl-diaminopimelate desuccinylase (376 aa).

H67 is a binding site for Zn(2+). D69 is a catalytic residue. D100 is a Zn(2+) binding site. Catalysis depends on E134, which acts as the Proton acceptor. The Zn(2+) site is built by E135, E163, and H349.

This sequence belongs to the peptidase M20A family. DapE subfamily. As to quaternary structure, homodimer. The cofactor is Zn(2+). Requires Co(2+) as cofactor.

The enzyme catalyses N-succinyl-(2S,6S)-2,6-diaminopimelate + H2O = (2S,6S)-2,6-diaminopimelate + succinate. It functions in the pathway amino-acid biosynthesis; L-lysine biosynthesis via DAP pathway; LL-2,6-diaminopimelate from (S)-tetrahydrodipicolinate (succinylase route): step 3/3. In terms of biological role, catalyzes the hydrolysis of N-succinyl-L,L-diaminopimelic acid (SDAP), forming succinate and LL-2,6-diaminopimelate (DAP), an intermediate involved in the bacterial biosynthesis of lysine and meso-diaminopimelic acid, an essential component of bacterial cell walls. The chain is Succinyl-diaminopimelate desuccinylase from Pseudoalteromonas translucida (strain TAC 125).